The sequence spans 94 residues: Na(+)/H(+) antiporter subunit F (94 aa).

The next 3 membrane-spanning stretches (helical) occupy residues 2–22 (FTLI…LYVI), 34–54 (VVAL…VSIL), and 59–79 (AFLD…IAFS).

It belongs to the CPA3 antiporters (TC 2.A.63) subunit F family. Forms a heterooligomeric complex that consists of seven subunits: MrpA, MrpB, MrpC, MrpD, MrpE, MrpF and MrpG.

The protein localises to the cell membrane. Functionally, mrp complex is a Na(+)/H(+) antiporter that is considered to be the major Na(+) excretion system in B.subtilis. Has a major role in Na(+) resistance and a minor role in Na(+)- and K(+)-dependent pH homeostasis as compared to TetB. MrpA may be the actual Na(+)/H(+) antiporter, although the six other Mrp proteins are all required for Na(+)/H(+) antiport activity and Na(+) resistance. MrpA is required for initiation of sporulation when external Na(+) concentration increases. Also transports Li(+) but not K(+), Ca(2+) or Mg(2+). Its function is as follows. Involved in cholate and Na(+) efflux activities, which may be mechanistically coupled. Does not require other Mrp proteins for its own function. This Bacillus subtilis (strain 168) protein is Na(+)/H(+) antiporter subunit F (mrpF).